A 267-amino-acid polypeptide reads, in one-letter code: 4-hydroxy-tetrahydrodipicolinate reductase (267 aa).

NAD(+)-binding positions include 9–14 (GAAGRM) and Asp35. Arg36 is an NADP(+) binding site. NAD(+) contacts are provided by residues 99–101 (GTT) and 123–126 (APNY). His156 acts as the Proton donor/acceptor in catalysis. His157 is a (S)-2,3,4,5-tetrahydrodipicolinate binding site. Lys160 serves as the catalytic Proton donor. 166 to 167 (GT) lines the (S)-2,3,4,5-tetrahydrodipicolinate pocket.

It belongs to the DapB family.

The protein resides in the cytoplasm. It catalyses the reaction (S)-2,3,4,5-tetrahydrodipicolinate + NAD(+) + H2O = (2S,4S)-4-hydroxy-2,3,4,5-tetrahydrodipicolinate + NADH + H(+). The catalysed reaction is (S)-2,3,4,5-tetrahydrodipicolinate + NADP(+) + H2O = (2S,4S)-4-hydroxy-2,3,4,5-tetrahydrodipicolinate + NADPH + H(+). Its pathway is amino-acid biosynthesis; L-lysine biosynthesis via DAP pathway; (S)-tetrahydrodipicolinate from L-aspartate: step 4/4. Its function is as follows. Catalyzes the conversion of 4-hydroxy-tetrahydrodipicolinate (HTPA) to tetrahydrodipicolinate. In Alkalilimnicola ehrlichii (strain ATCC BAA-1101 / DSM 17681 / MLHE-1), this protein is 4-hydroxy-tetrahydrodipicolinate reductase.